We begin with the raw amino-acid sequence, 538 residues long: Sensor protein CitS (538 aa).

The Cytoplasmic portion of the chain corresponds to Met1–Lys13. Residues Met14–Asn34 form a helical membrane-spanning segment. Residues Glu35 to Leu174 are Extracellular-facing. Residues Ile175–Val195 traverse the membrane as a helical segment. At Ala196–Gly538 the chain is on the cytoplasmic side. The PAS domain occupies Gln216 to Gln282. The region spanning Ala339–Glu534 is the Histidine kinase domain. A Phosphohistidine; by autocatalysis modification is found at His342.

It localises to the cell membrane. The enzyme catalyses ATP + protein L-histidine = ADP + protein N-phospho-L-histidine.. Member of the two-component regulatory system CitT/CitS. Functions probably as a membrane-associated protein kinase that phosphorylates CitT in response to environmental citrate or Mg(2+)-citrate complex. The polypeptide is Sensor protein CitS (citS) (Halalkalibacterium halodurans (strain ATCC BAA-125 / DSM 18197 / FERM 7344 / JCM 9153 / C-125) (Bacillus halodurans)).